Consider the following 229-residue polypeptide: 2-C-methyl-D-erythritol 4-phosphate cytidylyltransferase (229 aa).

This sequence belongs to the IspD/TarI cytidylyltransferase family. IspD subfamily.

The enzyme catalyses 2-C-methyl-D-erythritol 4-phosphate + CTP + H(+) = 4-CDP-2-C-methyl-D-erythritol + diphosphate. It participates in isoprenoid biosynthesis; isopentenyl diphosphate biosynthesis via DXP pathway; isopentenyl diphosphate from 1-deoxy-D-xylulose 5-phosphate: step 2/6. Functionally, catalyzes the formation of 4-diphosphocytidyl-2-C-methyl-D-erythritol from CTP and 2-C-methyl-D-erythritol 4-phosphate (MEP). The polypeptide is 2-C-methyl-D-erythritol 4-phosphate cytidylyltransferase (Neisseria gonorrhoeae (strain ATCC 700825 / FA 1090)).